A 165-amino-acid chain; its full sequence is Protein-export protein SecB (165 aa).

The protein belongs to the SecB family. In terms of assembly, homotetramer, a dimer of dimers. One homotetramer interacts with 1 SecA dimer.

The protein localises to the cytoplasm. Functionally, one of the proteins required for the normal export of preproteins out of the cell cytoplasm. It is a molecular chaperone that binds to a subset of precursor proteins, maintaining them in a translocation-competent state. It also specifically binds to its receptor SecA. This is Protein-export protein SecB from Ruegeria pomeroyi (strain ATCC 700808 / DSM 15171 / DSS-3) (Silicibacter pomeroyi).